A 722-amino-acid polypeptide reads, in one-letter code: Polyribonucleotide nucleotidyltransferase (722 aa).

Asp-495 and Asp-501 together coordinate Mg(2+). The KH domain maps to 562–621; sequence PRLLSFRIDPELIGTVIGPGGRTIKGITERTNTKIDIEDGGIVTIASHDGVAAEEAQKII. The region spanning 631-699 is the S1 motif domain; that stretch reads GEIFTGSITR…NRGRINLTLR (69 aa). Positions 701–711 are enriched in polar residues; sequence VSQNNNDMNYP. A disordered region spans residues 701–722; that stretch reads VSQNNNDMNYPQPTPTPVAPLN. Over residues 712–722 the composition is skewed to pro residues; sequence QPTPTPVAPLN.

It belongs to the polyribonucleotide nucleotidyltransferase family. Mg(2+) is required as a cofactor.

The protein localises to the cytoplasm. It catalyses the reaction RNA(n+1) + phosphate = RNA(n) + a ribonucleoside 5'-diphosphate. Its function is as follows. Involved in mRNA degradation. Catalyzes the phosphorolysis of single-stranded polyribonucleotides processively in the 3'- to 5'-direction. This is Polyribonucleotide nucleotidyltransferase from Prochlorococcus marinus (strain MIT 9211).